A 152-amino-acid polypeptide reads, in one-letter code: UPF0266 membrane protein YobD (152 aa).

3 helical membrane-spanning segments follow: residues 6 to 26 (LVLI…QFIM), 45 to 65 (VDSV…VTSH), and 67 to 87 (AQMT…IFWI).

It belongs to the UPF0266 family.

The protein localises to the cell inner membrane. The protein is UPF0266 membrane protein YobD of Salmonella choleraesuis (strain SC-B67).